The following is a 137-amino-acid chain: Small ribosomal subunit protein uS11 (137 aa).

The tract at residues 1–25 (MADRRRGAARGGAARPRRRERKNIP) is disordered. A compositionally biased stretch (basic residues) spans 15 to 25 (RPRRRERKNIP).

This sequence belongs to the universal ribosomal protein uS11 family. In terms of assembly, part of the 30S ribosomal subunit. Interacts with proteins S7 and S18. Binds to IF-3.

Its function is as follows. Located on the platform of the 30S subunit, it bridges several disparate RNA helices of the 16S rRNA. Forms part of the Shine-Dalgarno cleft in the 70S ribosome. The protein is Small ribosomal subunit protein uS11 of Thermomicrobium roseum (strain ATCC 27502 / DSM 5159 / P-2).